We begin with the raw amino-acid sequence, 155 residues long: Ribosomal RNA large subunit methyltransferase H (155 aa).

S-adenosyl-L-methionine-binding positions include Leu-72, Gly-103, and 122–127 (LSPLTL).

It belongs to the RNA methyltransferase RlmH family. As to quaternary structure, homodimer.

The protein resides in the cytoplasm. The catalysed reaction is pseudouridine(1915) in 23S rRNA + S-adenosyl-L-methionine = N(3)-methylpseudouridine(1915) in 23S rRNA + S-adenosyl-L-homocysteine + H(+). Its function is as follows. Specifically methylates the pseudouridine at position 1915 (m3Psi1915) in 23S rRNA. The protein is Ribosomal RNA large subunit methyltransferase H of Haemophilus ducreyi (strain 35000HP / ATCC 700724).